The sequence spans 339 residues: EEIG family member 2 (339 aa).

In terms of domain architecture, C2 NT-type spans 1 to 111 (MRLLDGGSFT…ILKVLISMQL (111 aa)). At Ser-197 the chain carries Phosphoserine. The tract at residues 226–262 (TEPITAEPSPDPTAAAATATTTTAKEEEASEKLARCP) is disordered. Low complexity predominate over residues 230–248 (TAEPSPDPTAAAATATTTT). Residues 249–259 (AKEEEASEKLA) are compositionally biased toward basic and acidic residues. Phosphoserine is present on residues Ser-255, Ser-267, Ser-299, Ser-300, and Ser-329.

This sequence belongs to the EEIG family. In terms of tissue distribution, expressed in bone marrow-derived macrophages.

In Mus musculus (Mouse), this protein is EEIG family member 2 (Eeig2).